We begin with the raw amino-acid sequence, 355 residues long: Probable aldo-keto reductase 3 (355 aa).

The active-site Proton donor is Y70. A substrate-binding site is contributed by H138. 217 to 227 (SPLGRGFFSSG) serves as a coordination point for NADP(+).

This sequence belongs to the aldo/keto reductase family.

The protein is Probable aldo-keto reductase 3 of Oryza sativa subsp. japonica (Rice).